We begin with the raw amino-acid sequence, 385 residues long: tRNA-specific 2-thiouridylase MnmA (385 aa).

ATP is bound by residues 30-37 (GMSGGVDS) and Met-56. Residues 118–120 (NPD) are interaction with target base in tRNA. Cys-123 functions as the Nucleophile in the catalytic mechanism. An intrachain disulfide couples Cys-123 to Cys-220. Gly-148 contacts ATP. The interval 170–172 (KDQ) is interaction with tRNA. The Cysteine persulfide intermediate role is filled by Cys-220. The segment at 332–333 (RY) is interaction with tRNA.

Belongs to the MnmA/TRMU family.

It localises to the cytoplasm. The enzyme catalyses S-sulfanyl-L-cysteinyl-[protein] + uridine(34) in tRNA + AH2 + ATP = 2-thiouridine(34) in tRNA + L-cysteinyl-[protein] + A + AMP + diphosphate + H(+). Functionally, catalyzes the 2-thiolation of uridine at the wobble position (U34) of tRNA, leading to the formation of s(2)U34. This chain is tRNA-specific 2-thiouridylase MnmA, found in Haemophilus influenzae (strain PittGG).